The following is a 292-amino-acid chain: Malectin (292 aa).

The N-terminal stretch at 1-28 is a signal peptide; it reads MLGAWAVEGTAVALLRLLLLLLPPAIRG. The Lumenal segment spans residues 29-269; sequence PGLGVAGVAG…TPNPYASDNS (241 aa). A carbohydrate contacts are provided by tyrosine 82, tyrosine 104, tyrosine 131, phenylalanine 132, and aspartate 201. The disordered stretch occupies residues 221–265; the sequence is LQPHPGLEKKEEEEEEEEYDEGSNLKKQTNKNRVQSGPRTPNPYA. Positions 231–241 are enriched in acidic residues; the sequence is EEEEEEEEYDE. The segment covering 245–265 has biased composition (polar residues); it reads LKKQTNKNRVQSGPRTPNPYA. Residue asparagine 268 is glycosylated (N-linked (GlcNAc...) asparagine). The chain crosses the membrane as a helical span at residues 270-290; that stretch reads SLMFPILVAFGVFIPTLFCLC. Residues 291-292 lie on the Cytoplasmic side of the membrane; that stretch reads RL.

It belongs to the malectin family. In terms of assembly, interacts with the oligosaccharyltransferase (OST) complex.

It localises to the endoplasmic reticulum membrane. Functionally, carbohydrate-binding protein with a strong ligand preference for Glc2-N-glycan. May play a role in the early steps of protein N-glycosylation. This chain is Malectin, found in Homo sapiens (Human).